We begin with the raw amino-acid sequence, 104 residues long: Glutaredoxin-C15 (104 aa).

A Glutaredoxin domain is found at 1–103 (MERVAKLSTE…PMLKAAGAIW (103 aa)). The cysteines at positions 21 and 24 are disulfide-linked.

This sequence belongs to the glutaredoxin family. CC-type subfamily.

It is found in the cytoplasm. Its function is as follows. Has a glutathione-disulfide oxidoreductase activity in the presence of NADPH and glutathione reductase. Reduces low molecular weight disulfides and proteins. This is Glutaredoxin-C15 (GRXC15) from Oryza sativa subsp. japonica (Rice).